The chain runs to 644 residues: CTP synthase (644 aa).

The Glutamine amidotransferase type-1 domain maps to 300–551 (SIAIVGKYTK…LGLILASVDR (252 aa)). Residues C399, H527, and E529 each act as for GATase activity in the active site.

The protein belongs to the CTP synthase family.

The catalysed reaction is UTP + L-glutamine + ATP + H2O = CTP + L-glutamate + ADP + phosphate + 2 H(+). Its pathway is pyrimidine metabolism; CTP biosynthesis via de novo pathway; CTP from UDP: step 2/2. In terms of biological role, catalyzes the ATP-dependent amination of UTP to CTP with either L-glutamine or ammonia as the source of nitrogen. Constitutes the rate-limiting enzyme in the synthesis of cytosine nucleotides. The sequence is that of CTP synthase from Drosophila pseudoobscura pseudoobscura (Fruit fly).